Reading from the N-terminus, the 202-residue chain is MSVKYIATSKLPTPWGVFAMHGFEETATGKEHVALTFGQLDPTEPMLGRIHSECLTGDALFSLRCDCGFQLQAAMQSIAEQGQGFLLYLRQEGRGIGLLNKIRAYELQDAGANTVEANERLGFEADMRKYDMILPMLTQIGVTKVKLMTNNPRKVMAMQNMGIEVAERIPLQVGKNRYNESYLKTKSTELGHMMSEYHFHDE.

Arg49–Glu53 is a GTP binding site. The Zn(2+) site is built by Cys54, Cys65, and Cys67. GTP contacts are provided by residues Gln70, Glu92 to Arg94, and Thr114. Asp126 acts as the Proton acceptor in catalysis. Catalysis depends on Arg128, which acts as the Nucleophile. GTP-binding residues include Thr149 and Lys154.

The protein belongs to the GTP cyclohydrolase II family. Requires Zn(2+) as cofactor.

The catalysed reaction is GTP + 4 H2O = 2,5-diamino-6-hydroxy-4-(5-phosphoribosylamino)-pyrimidine + formate + 2 phosphate + 3 H(+). The protein operates within cofactor biosynthesis; riboflavin biosynthesis; 5-amino-6-(D-ribitylamino)uracil from GTP: step 1/4. Catalyzes the conversion of GTP to 2,5-diamino-6-ribosylamino-4(3H)-pyrimidinone 5'-phosphate (DARP), formate and pyrophosphate. This Shewanella frigidimarina (strain NCIMB 400) protein is GTP cyclohydrolase-2.